A 91-amino-acid chain; its full sequence is GWPAYPGSNGIRSSVCQKKLGCGSKNLASLGVCKAFCLGRKRFWQKCGKNGSSGKGSRICNPVLAHAVEKAGKGLIKVTDMAVATIIKFAG.

Disulfide bonds link C16–C37, C22–C33, and C47–C60.

It belongs to the worm cytolysin family. As to expression, localized within the skin and proboscis and are most readily isolated from body mucus secretions.

The protein resides in the secreted. Functionally, cytolysin that shows hemolytic activity (on bovine erythrocytes, HC(50)=5.75 mg/ml). This hemolytic activity is completely inhibited by small unilamelar vesicles composed of PC/PG, PC/PI and PC/PS in 1:1 molar ratios (with at least 100 mg/ml concentration). This is Parbolysin P6 from Parborlasia corrugatus (Antarctic nemertean worm).